The primary structure comprises 332 residues: Trace amine-associated receptor 1 (332 aa).

The Extracellular segment spans residues 1–23 (MHLCHAITNISHRNSDWSREVQA). Asn9 carries N-linked (GlcNAc...) asparagine glycosylation. Residues 24-48 (SLYSLMSLIILATLVGNLIVIISIS) form a helical membrane-spanning segment. Topologically, residues 49–58 (HFKQLHTPTN) are cytoplasmic. A helical membrane pass occupies residues 59 to 80 (WLLHSMAIVDFLLGCLIMPCSM). Residues 81-95 (VRTVERCWYFGEILC) lie on the Extracellular side of the membrane. A disulfide bond links Cys95 and Cys181. Residues 96 to 118 (KVHTSTDIMLSSASIFHLAFISI) form a helical membrane-spanning segment. 2-phenylethylamine is bound at residue Asp102. The Cytoplasmic segment spans residues 119–138 (DRYCAVCDPLRYKAKINIST). The helical transmembrane segment at 139-160 (ILVMILVSWSLPAVYAFGMIFL) threads the bilayer. Residues 161 to 187 (ELNLKGVEELYRSQVSDLGGCSPFFSK) lie on the Extracellular side of the membrane. The tract at residues 174-185 (QVSDLGGCSPFF) is extracellular Loop 2 (ECL2). A helical membrane pass occupies residues 188–210 (VSGVLAFMTSFYIPGSVMLFVYY). Residues 211–246 (RIYFIAKGQARSINRTNVQVGLEGKSQAPQSKETKA) lie on the Cytoplasmic side of the membrane. The helical transmembrane segment at 247-270 (AKTLGIMVGVFLVCWCPFFLCTVL) threads the bilayer. The Extracellular segment spans residues 271 to 283 (DPFLGYVIPPSLN). Residues 284 to 304 (DALYWFGYLNSALNPMVYAFF) traverse the membrane as a helical segment. Topologically, residues 305–332 (YPWFRRALKMVLLGKIFQKDSSRSKLFL) are cytoplasmic.

It belongs to the G-protein coupled receptor 1 family. In terms of tissue distribution, widely distributed throughout the brain. Strongly expressed in the mitral cell layer of the olfactory bulb, piriform cortex, the arcuate, motor, and mesencephalic trigeminal nuclei, lateral reticular and hypoglossal nuclei, cerebellar Purkinje cells, and ventral horn of the spinal cord. Moderately expressed in the frontal, entorhinal, and agranular cortices, the ventral pallidum, thalamus, hippocampus, several hypothalamic nuclei, ambiguus, dorsal raphe, and gigantocellular reticular nuclei. Weakly expressed in the septum, basal ganglia, amygdala, myelencephalon, and spinal cord dorsal horn. Particularly interesting is the moderate expression in several monoaminergic cell groups, namely the dorsal raphe, the locus coeruleus, and the ventral tegmental area.

It is found in the endomembrane system. The protein resides in the endoplasmic reticulum membrane. Its subcellular location is the cell membrane. With respect to regulation, activated by SEP-363856 small molecule: IHCH-7179 acts both as an agonist activator for HTR1A and TAAR1. In terms of biological role, intracellular G-protein coupled receptor for trace amines, which recognizes endogenous amine-containing metabolites such as beta-phenylethylamine (beta-PEA), 3-iodothyronamine (T1AM), isoamylamine (IAA), cadaverine (CAD), cyclohexylamine (CHA), p-tyramine (p-TYR), trimethylamine (TMA), octopamine and tryptamine. Also functions as a receptor for various drugs and psychoactive substances, such as amphetamine and methamphetamine. Unresponsive to classical biogenic amines, such as epinephrine and histamine and only partially activated by dopamine and serotonin. Expressed in both the central and peripheral nervous system: TAAR1 activation regulates the activity of several neurotransmitter signaling pathways by (1) decreasing the basal firing rates of the neurons involved and by (2) lowering the sensitivity of receptors to neurotransmitters. Ligand binding causes a conformation change that triggers signaling via guanine nucleotide-binding proteins (G proteins) and modulates the activity of downstream effectors. TAAR1 is coupled with different G(i)/G(o)-, G(s)- or G(q)/G(11) classes of G alpha proteins depending on the ligand. CAD-binding is coupled to G(i)/G(o) G alpha proteins and mediates inhibition of adenylate cyclase activity. T1AM- or beta-PEA-binding is coupled to G(s) G alpha proteins and mediates activation of adenylate cyclase activity. CHA- or IAA-binding is coupled to G(q)/G(11) G alpha proteins and activates phospholipase C-beta, releasing diacylglycerol (DAG) and inositol 1,4,5-trisphosphate (IP3) second messengers. TMA-binding is coupled with all three G(i)/G(o)-, G(s)- or G(q)/G(11) G alpha protein subtypes. The sequence is that of Trace amine-associated receptor 1 from Mus musculus (Mouse).